We begin with the raw amino-acid sequence, 328 residues long: dTDP-4-dehydrorhamnose 3,5-epimerase (328 aa).

Residues arginine 23, glutamate 28, 46–48 (QEN), and arginine 58 contribute to the substrate site. Histidine 61 acts as the Proton acceptor in catalysis. Substrate is bound by residues lysine 70 and histidine 117. Tyrosine 130 serves as the catalytic Proton donor. Glutamate 141 and lysine 166 together coordinate substrate.

It belongs to the dTDP-4-dehydrorhamnose 3,5-epimerase family. As to quaternary structure, homodimer.

The enzyme catalyses dTDP-4-dehydro-6-deoxy-alpha-D-glucose = dTDP-4-dehydro-beta-L-rhamnose. It functions in the pathway carbohydrate biosynthesis; dTDP-L-rhamnose biosynthesis. It participates in bacterial outer membrane biogenesis; LPS O-antigen biosynthesis. In terms of biological role, catalyzes the epimerization of the C3' and C5'positions of dTDP-6-deoxy-D-xylo-4-hexulose, forming dTDP-6-deoxy-L-lyxo-4-hexulose. This chain is dTDP-4-dehydrorhamnose 3,5-epimerase (rfbC), found in Neisseria gonorrhoeae.